We begin with the raw amino-acid sequence, 323 residues long: Beta-ketoacyl-[acyl-carrier-protein] synthase III (323 aa).

Active-site residues include C114 and H250. The interval 251–255 is ACP-binding; the sequence is QANKR. The active site involves N280.

It belongs to the thiolase-like superfamily. FabH family. In terms of assembly, homodimer.

The protein resides in the cytoplasm. It catalyses the reaction malonyl-[ACP] + acetyl-CoA + H(+) = 3-oxobutanoyl-[ACP] + CO2 + CoA. It functions in the pathway lipid metabolism; fatty acid biosynthesis. Its function is as follows. Catalyzes the condensation reaction of fatty acid synthesis by the addition to an acyl acceptor of two carbons from malonyl-ACP. Catalyzes the first condensation reaction which initiates fatty acid synthesis and may therefore play a role in governing the total rate of fatty acid production. Possesses both acetoacetyl-ACP synthase and acetyl transacylase activities. Its substrate specificity determines the biosynthesis of branched-chain and/or straight-chain of fatty acids. The sequence is that of Beta-ketoacyl-[acyl-carrier-protein] synthase III from Hyphomonas neptunium (strain ATCC 15444).